Reading from the N-terminus, the 103-residue chain is Protein SUP-1 (103 aa).

The signal sequence occupies residues 1–16; that stretch reads MMSYIALAACIGLAMA. The Extracellular portion of the chain corresponds to 17–75; the sequence is ANVDHDVKSAVNEVTTTKDGDTYCPVPLVGTKCGTSSIFHYWKCCGELNKECCFNLQTW. A helical transmembrane segment spans residues 76 to 96; it reads VWVTLALFGVIFIASFVISLV. The Cytoplasmic segment spans residues 97 to 103; that stretch reads RCICCRK.

As to expression, expressed in a subset of neurons and in body wall muscles. In the nervous system, expressed specifically in cholinergic motor neurons of the ventral nerve cord, a subset of cholinergic head neurons, anterior sublateral neurons, and body sublateral neurons (at protein level).

Its subcellular location is the cell membrane. It is found in the perikaryon. The protein resides in the cell projection. It localises to the synapse. The protein localises to the cytoplasmic vesicle. Its subcellular location is the secretory vesicle. It is found in the synaptic vesicle. Functionally, may be involved in trafficking or stabilization of the vesicular acetylcholine transporter unc-17. The protein is Protein SUP-1 of Caenorhabditis elegans.